A 394-amino-acid chain; its full sequence is S-adenosylmethionine synthase 2 (394 aa).

Glutamate 11 provides a ligand contact to Mg(2+). Histidine 17 provides a ligand contact to ATP. Glutamate 45 is a binding site for K(+). Glutamate 58 and glutamine 101 together coordinate L-methionine. ATP is bound by residues 169 to 171 (DGK), 237 to 240 (SGRF), aspartate 248, 254 to 255 (RK), alanine 271, lysine 275, and lysine 279. Residue aspartate 248 participates in L-methionine binding. Lysine 279 contributes to the L-methionine binding site.

The protein belongs to the AdoMet synthase family. As to quaternary structure, homotetramer. Mn(2+) is required as a cofactor. Requires Mg(2+) as cofactor. Co(2+) serves as cofactor. The cofactor is K(+).

Its subcellular location is the cytoplasm. The catalysed reaction is L-methionine + ATP + H2O = S-adenosyl-L-methionine + phosphate + diphosphate. Its pathway is amino-acid biosynthesis; S-adenosyl-L-methionine biosynthesis; S-adenosyl-L-methionine from L-methionine: step 1/1. Functionally, catalyzes the formation of S-adenosylmethionine from methionine and ATP. The reaction comprises two steps that are both catalyzed by the same enzyme: formation of S-adenosylmethionine (AdoMet) and triphosphate, and subsequent hydrolysis of the triphosphate. The protein is S-adenosylmethionine synthase 2 (SAM2) of Oryza sativa subsp. japonica (Rice).